Reading from the N-terminus, the 255-residue chain is Cyclic di-GMP phosphodiesterase PdeH (255 aa).

The EAL domain maps to 13–255; it reads EASIESLQER…ETLNTAVLAL (243 aa).

The enzyme catalyses 3',3'-c-di-GMP + H2O = 5'-phosphoguanylyl(3'-&gt;5')guanosine + H(+). Functionally, involved in the control of the switch from cell motility to adhesion via regulation of cellular levels of cyclic-di-GMP (c-di-GMP). Part of a signaling cascade that regulates curli biosynthesis. The cascade is composed of two c-di-GMP control modules, in which c-di-GMP controlled by the DgcE/PdeH pair (module I) regulates the activity of the DgcM/PdeR pair (module II), which in turn regulates activity of the transcription factor MlrA and expression of the master biofilm regulator csgD. Effect on flagella is controlled via the c-di-GMP-binding flagellar brake protein YcgR. The chain is Cyclic di-GMP phosphodiesterase PdeH from Escherichia coli (strain K12).